Consider the following 1166-residue polypeptide: Myosin-1 (1166 aa).

Residues 1–13 (MSQKVTPFMQSLK) show a composition bias toward polar residues. A disordered region spans residues 1 to 71 (MSQKVTPFMQ…AGDSEDSPYS (71 aa)). S14 is modified (phosphoserine). The span at 32–45 (NSSGASVRLTNSNV) shows a compositional bias: polar residues. The Myosin N-terminal SH3-like domain occupies 112 to 161 (KKILQSWIQLPNGNWELGKILSTSGEESVISLPEGKVIKVISETLVPANP). The Myosin motor domain maps to 165-837 (DGVDDLMQLS…QIGVLEDTRN (673 aa)). ATP is bound by residues 256 to 263 (GESGAGKT) and 304 to 312 (NDNSSRFGK). 2 actin-binding regions span residues 589-623 (LFEK…KQHL) and 717-739 (LFQL…KPNN). IQ domains are found at residues 839–868 (TLHG…GISI), 862–891 (LKRG…RHKA), 888–917 (RHKA…ASVV), and 911–940 (IADA…LKSG). The stretch at 955 to 1005 (SVLSELQRRVLKAEAALREKEEENDILQQRLQQYENRWSEYETKMKSMEEI) forms a coiled coil. Residues 1030 to 1065 (ARNSDASVNASDATDWDSSSNQFRSQTSNGVGSRLQ) form a disordered region. Residues 1032–1060 (NSDASVNASDATDWDSSSNQFRSQTSNGV) are compositionally biased toward polar residues.

This sequence belongs to the TRAFAC class myosin-kinesin ATPase superfamily. Myosin family. Plant myosin class VIII subfamily. In terms of assembly, homodimer.

The protein localises to the cell junction. Its subcellular location is the plasmodesma. It is found in the cytoplasm. The protein resides in the cytoskeleton. It localises to the phragmoplast. The protein localises to the endosome. Its subcellular location is the endoplasmic reticulum. Functionally, myosin heavy chain that is required for the cell cycle-regulated transport of various organelles and proteins for their segregation. Functions by binding with its tail domain to receptor proteins on organelles and exerting force with its N-terminal motor domain against actin filaments, thereby transporting its cargo along polarized actin cables. Involved in endocytosis via its action in endosomal trafficking. This chain is Myosin-1 (VIII-1), found in Arabidopsis thaliana (Mouse-ear cress).